Here is a 491-residue protein sequence, read N- to C-terminus: MTKTKEIIKTGWNLDSTYAHLPKQFFTIITPNPVSAPKLVILNEPLATVLGLDSEALQSKDSLEVLAGNRALEGALPLAQAYAGHQFGHFALLGDGRALLLGEQITPSGERFDLQLKGSGPTPYSRGGDGRASLGPMLREYIISEAMHALGIATTRSLAVVTTGEAVIRETDLPGAILTRVAASHLRVGTFEYIAKWGTVQELRALADYTLQRHFPEVGAVENPYLSLVQEVIKGQAALIAKWQLVGFIHGVMNTDNMTISGETIDYGPCAFMDSYDPKTVFSSIDRQGRYAYGNQPHIAGWNLARFAETLLPLLHEDQDEAVKLAQDEISRFIQLYHSHWLTGMRAKLGIFNEEVQDESLIEELLKMMEKNHADYTNTFRALSFETLEGTALFGTTEFAQWHELWRARLNRQQESKDASQQLMQNSNPGVIPRNHRVEAALDAAVKQGDYSVMEQLLNVLSKPYAHSPEQAEYCMPPAPSNRPYRTFCGT.

ATP is bound by residues Gly94, Gly96, Arg97, Lys117, Asp129, Gly130, Arg180, and Arg187. Asp256 serves as the catalytic Proton acceptor. Mg(2+) is bound by residues Asn257 and Asp266. Position 266 (Asp266) interacts with ATP.

This sequence belongs to the SELO family. Mg(2+) serves as cofactor. Requires Mn(2+) as cofactor.

The catalysed reaction is L-seryl-[protein] + ATP = 3-O-(5'-adenylyl)-L-seryl-[protein] + diphosphate. It catalyses the reaction L-threonyl-[protein] + ATP = 3-O-(5'-adenylyl)-L-threonyl-[protein] + diphosphate. The enzyme catalyses L-tyrosyl-[protein] + ATP = O-(5'-adenylyl)-L-tyrosyl-[protein] + diphosphate. It carries out the reaction L-histidyl-[protein] + UTP = N(tele)-(5'-uridylyl)-L-histidyl-[protein] + diphosphate. The catalysed reaction is L-seryl-[protein] + UTP = O-(5'-uridylyl)-L-seryl-[protein] + diphosphate. It catalyses the reaction L-tyrosyl-[protein] + UTP = O-(5'-uridylyl)-L-tyrosyl-[protein] + diphosphate. Its function is as follows. Nucleotidyltransferase involved in the post-translational modification of proteins. It can catalyze the addition of adenosine monophosphate (AMP) or uridine monophosphate (UMP) to a protein, resulting in modifications known as AMPylation and UMPylation. This chain is Protein nucleotidyltransferase YdiU, found in Alkaliphilus metalliredigens (strain QYMF).